Consider the following 429-residue polypeptide: MSLHSKSESLYAQAKQVIPGGVNSPVRAFNGVGGVPLFIERADGAYLFDVDGKAYIDYVGSWGPMVLGHNHPAIRNAVIEAAQRGLSFGAPTEMEVKMAELVTELVPTMDMVRMVNSGTEATMSAIRLARGYTNRDKIIKFEGCYHGHADCLLVKAGSGALTLGQPNSPGVPADFAKHTLTCTFNDLDSVRTAFEQYPSEIACIIVEPVAGNMNCVPPLPEFLPGLRALCDKYGALLIIDEVMTGFRVALAGAQSYYDVVPDLTCLGKIIGGGMPVGAFGGRREVMAALAPTGPVYQAGTLSGNPIAMAAGFACLTEVSQVGVHQTLTELTDMLAAGLLHAAKEENVALVVNHVGGMFGLFFTDALSVTSYQDVMQCDVERFKRFFHLMLEEGVYLAPSAFEAGFMSIAHSKEDIQRTIDAARRCFAKL.

Position 268 is an N6-(pyridoxal phosphate)lysine (Lys268).

This sequence belongs to the class-III pyridoxal-phosphate-dependent aminotransferase family. HemL subfamily. As to quaternary structure, homodimer. Pyridoxal 5'-phosphate serves as cofactor.

It is found in the cytoplasm. It catalyses the reaction (S)-4-amino-5-oxopentanoate = 5-aminolevulinate. The protein operates within porphyrin-containing compound metabolism; protoporphyrin-IX biosynthesis; 5-aminolevulinate from L-glutamyl-tRNA(Glu): step 2/2. The chain is Glutamate-1-semialdehyde 2,1-aminomutase from Serratia proteamaculans (strain 568).